Reading from the N-terminus, the 313-residue chain is Protein-methionine-sulfoxide reductase catalytic subunit MsrP (313 aa).

Residues M1–A44 constitute a signal peptide (tat-type signal). Mo-molybdopterin-binding positions include N76, Y79–E80, C134, T169, N217, R222, and G233–K235.

Belongs to the MsrP family. Heterodimer of a catalytic subunit (MsrP) and a heme-binding subunit (MsrQ). The cofactor is Mo-molybdopterin. Post-translationally, predicted to be exported by the Tat system. The position of the signal peptide cleavage has not been experimentally proven.

The protein localises to the periplasm. The catalysed reaction is L-methionyl-[protein] + a quinone + H2O = L-methionyl-(S)-S-oxide-[protein] + a quinol. The enzyme catalyses L-methionyl-[protein] + a quinone + H2O = L-methionyl-(R)-S-oxide-[protein] + a quinol. Part of the MsrPQ system that repairs oxidized periplasmic proteins containing methionine sulfoxide residues (Met-O), using respiratory chain electrons. Thus protects these proteins from oxidative-stress damage caused by reactive species of oxygen and chlorine generated by the host defense mechanisms. MsrPQ is essential for the maintenance of envelope integrity under bleach stress, rescuing a wide series of structurally unrelated periplasmic proteins from methionine oxidation. The catalytic subunit MsrP is non-stereospecific, being able to reduce both (R-) and (S-) diastereoisomers of methionine sulfoxide. In Anaeromyxobacter dehalogenans (strain 2CP-1 / ATCC BAA-258), this protein is Protein-methionine-sulfoxide reductase catalytic subunit MsrP.